Consider the following 78-residue polypeptide: Small ribosomal subunit protein eS21 (78 aa).

This sequence belongs to the eukaryotic ribosomal protein eS21 family.

This Dictyostelium discoideum (Social amoeba) protein is Small ribosomal subunit protein eS21 (rps21).